Reading from the N-terminus, the 246-residue chain is Proteolipid protein DM gamma (246 aa).

The next 4 membrane-spanning stretches (helical) occupy residues 19–35 (LLAT…FCGC), 71–87 (VIYG…IILL), 118–134 (VFLT…VFGF), and 206–222 (FIVA…ALLI).

The protein belongs to the myelin proteolipid protein family. As to expression, highly expressed in white matter in myelinating shark brain.

It is found in the membrane. This chain is Proteolipid protein DM gamma, found in Squalus acanthias (Spiny dogfish).